Reading from the N-terminus, the 47-residue chain is Large ribosomal subunit protein bL33 (47 aa).

This sequence belongs to the bacterial ribosomal protein bL33 family.

This is Large ribosomal subunit protein bL33 from Staphylococcus saprophyticus.